We begin with the raw amino-acid sequence, 300 residues long: Junctional adhesion molecule A (300 aa).

Positions 1–26 (MGTEGKAGSKLLFLFTSMILGSLVQG) are cleaved as a signal peptide. Over 27–238 (KGSVYSPQTA…MEAVELNVGG (212 aa)) the chain is Extracellular. 2 Ig-like V-type domains span residues 28–122 (GSVY…GEVS) and 134–228 (PTVS…EAVR). Cystine bridges form between Cys-49-Cys-108 and Cys-152-Cys-212. An N-linked (GlcNAc...) asparagine glycan is attached at Asn-185. The chain crosses the membrane as a helical span at residues 239–259 (IVAAVLVTLILLGLLIFGIWF). Over 260–300 (AYSRGYFERTKKGTAPGKKVIYSQPSARSEGEFKQTSSFLV) the chain is Cytoplasmic. 3 positions are modified to phosphoserine: Ser-282, Ser-285, and Ser-288.

This sequence belongs to the immunoglobulin superfamily. Interacts with the ninth PDZ domain of MPDZ. Interacts with the first PDZ domain of PARD3. The association between PARD3 and PARD6B probably disrupts this interaction. Interacts with ITGAL (via I-domain). Interacts with CD151. N-glycosylated.

It is found in the cell junction. It localises to the tight junction. The protein resides in the cell membrane. Its function is as follows. Seems to play a role in epithelial tight junction formation. Appears early in primordial forms of cell junctions and recruits PARD3. The association of the PARD6-PARD3 complex may prevent the interaction of PARD3 with JAM1, thereby preventing tight junction assembly. Plays a role in regulating monocyte transmigration involved in integrity of epithelial barrier. Ligand for integrin alpha-L/beta-2 involved in memory T-cell and neutrophil transmigration. This is Junctional adhesion molecule A (F11r) from Rattus norvegicus (Rat).